A 233-amino-acid chain; its full sequence is Large ribosomal subunit protein uL3 (233 aa).

It belongs to the universal ribosomal protein uL3 family. Part of the 50S ribosomal subunit. Forms a cluster with proteins L14 and L19.

One of the primary rRNA binding proteins, it binds directly near the 3'-end of the 23S rRNA, where it nucleates assembly of the 50S subunit. The protein is Large ribosomal subunit protein uL3 of Ureaplasma parvum serovar 3 (strain ATCC 27815 / 27 / NCTC 11736).